A 580-amino-acid polypeptide reads, in one-letter code: Serine/threonine-protein kinase PINK1, mitochondrial (580 aa).

The transit peptide at 1-77 (MAVRQALGRG…RFFRQSVAGL (77 aa)) directs the protein to the mitochondrion. The interval 28-60 (VSGWGKPGPGAAWGRGERPGRVSSPGAQPRPLG) is disordered. Residues 94 to 110 (GPCGRAVFLAFGLGLGL) form a helical membrane-spanning segment. The required for outer membrane localization stretch occupies residues 111–117 (IEEKQAE). In terms of domain architecture, Protein kinase spans 156–510 (YLIGQAIGKG…IAANVLHLSL (355 aa)). ATP-binding positions include 162 to 170 (IGKGCNAAV) and lysine 218. At serine 227 the chain carries Phosphoserine; by autocatalysis. Aspartate 361 functions as the Proton acceptor in the catalytic mechanism. Serine 401 carries the phosphoserine; by autocatalysis modification.

This sequence belongs to the protein kinase superfamily. Ser/Thr protein kinase family. Upon mitochondrial depolarization, it forms a supercomplex with TOM and TIM23 complexes. PINK1-TOM-TIM23 supercomplex formation requires PINK1 interaction with TOMM20 and TOMM70 and is critical for PINK1 stabilization at the outer mitochondrial membrane, kinase activation and downstream mitophagy. Upon mitochondrial depolarization, interacts with TIMM23; the interaction is required for PINK1 accumulation at the outer mitochondrial membrane, kinase activation by autophosphorylation and PRKN recruitement to mitochondria. Interacts with PRKN. Interacts with FBXO7. Forms a complex with PRKN and PARK7. Interacts with NENF. The cofactor is Mg(2+). Proteolytically cleaved. In healthy cells, the precursor is continuously imported into the inner mitochondrial membrane (IMM), where it is proteolytically cleaved by mitochondrial-processing peptidase (MPP) and then undergoes further proteolytic cleavage by PARL or AFG3L2 to give rise to the 52 kDa short form. The 52 kDa short form is then released into the cytosol where it rapidly undergoes proteasome-dependent degradation. In unhealthy cells, when cellular stress conditions lead to the loss of mitochondrial membrane potential, mitochondrial import is impaired leading to the precursor accumulating on the outer mitochondrial membrane (OMM). If accumulation at the OMM fails and it is imported into the depolarized mitochondria, it undergoes cleavage by the IMM protease OMA1, promoting its subsequent degradation by the proteasome. Post-translationally, autophosphorylated. Loss of mitochondrial membrane potential results in the precursor accumulating on the outer mitochondrial membrane (OMM) where it is activated by autophosphorylation. Autophosphorylation at Ser-227 and Ser-401 is sufficient and essential for selective recruitment of PRKN to depolarized mitochondria, via PINK1-dependent phosphorylation of ubiquitin and maybe PRKN.

It is found in the mitochondrion outer membrane. Its subcellular location is the mitochondrion inner membrane. The protein localises to the cytoplasm. The protein resides in the cytosol. The catalysed reaction is L-seryl-[protein] + ATP = O-phospho-L-seryl-[protein] + ADP + H(+). The enzyme catalyses L-threonyl-[protein] + ATP = O-phospho-L-threonyl-[protein] + ADP + H(+). In terms of biological role, serine/threonine-protein kinase which acts as a sensor of mitochondrial damage and protects against mitochondrial dysfunction during cellular stress. It phosphorylates mitochondrial proteins to coordinate mitochondrial quality control mechanisms that remove and replace dysfunctional mitochondrial components. Depending on the severity of mitochondrial damage, activity ranges from preventing apoptosis and stimulating mitochondrial biogenesis to eliminating severely damaged mitochondria via PINK1-PRKN-dependent mitophagy. When cellular stress results in irreversible mitochondrial damage, PINK1 accumulates at the outer mitochondrial membrane (OMM) where it phosphorylates pre-existing polyubiquitin chains at 'Ser-65', recruits PRKN from the cytosol to the OMM and activates PRKN by phosphorylation at 'Ser-65'; activated PRKN then ubiquinates VDAC1 and other OMM proteins to initiate mitophagy. The PINK1-PRKN pathway also promotes fission of damaged mitochondria through phosphorylation and PRKN-dependent degradation of mitochondrial proteins involved in fission such as MFN2. This prevents the refusion of unhealthy mitochondria with the mitochondrial network or initiates mitochondrial fragmentation facilitating their later engulfment by autophagosomes. Also promotes mitochondrial fission independently of PRKN and ATG7-mediated mitophagy, via the phosphorylation and activation of DNM1L. Regulates motility of damaged mitochondria by promoting the ubiquitination and subsequent degradation of MIRO1 and MIRO2; in motor neurons, this likely inhibits mitochondrial intracellular anterograde transport along the axons which probably increases the chance of the mitochondria undergoing mitophagy in the soma. Required for ubiquinone reduction by mitochondrial complex I by mediating phosphorylation of complex I subunit NDUFA10. Phosphorylates LETM1, positively regulating its mitochondrial calcium transport activity. In Rattus norvegicus (Rat), this protein is Serine/threonine-protein kinase PINK1, mitochondrial.